A 124-amino-acid polypeptide reads, in one-letter code: Small ribosomal subunit protein uS12 (124 aa).

Residues 1 to 24 form a disordered region; the sequence is MTTINQLVRKPRQATTYKSASPAL. The residue at position 89 (Asp89) is a 3-methylthioaspartic acid.

This sequence belongs to the universal ribosomal protein uS12 family. Part of the 30S ribosomal subunit. Contacts proteins S8 and S17. May interact with IF1 in the 30S initiation complex.

In terms of biological role, with S4 and S5 plays an important role in translational accuracy. Its function is as follows. Interacts with and stabilizes bases of the 16S rRNA that are involved in tRNA selection in the A site and with the mRNA backbone. Located at the interface of the 30S and 50S subunits, it traverses the body of the 30S subunit contacting proteins on the other side and probably holding the rRNA structure together. The combined cluster of proteins S8, S12 and S17 appears to hold together the shoulder and platform of the 30S subunit. The chain is Small ribosomal subunit protein uS12 from Xanthomonas axonopodis pv. citri (strain 306).